Here is a 101-residue protein sequence, read N- to C-terminus: Acylphosphatase (101 aa).

Residues 12 to 98 form the Acylphosphatase-like domain; that stretch reads RVHVFVTGRV…EGLRGFEVKR (87 aa). Active-site residues include R27 and N45.

It belongs to the acylphosphatase family.

The catalysed reaction is an acyl phosphate + H2O = a carboxylate + phosphate + H(+). This chain is Acylphosphatase (acyP), found in Trichormus variabilis (strain ATCC 29413 / PCC 7937) (Anabaena variabilis).